Here is a 216-residue protein sequence, read N- to C-terminus: ATP-dependent Clp protease proteolytic subunit (216 aa).

The active-site Nucleophile is Ser-120. The active site involves His-145.

It belongs to the peptidase S14 family. In terms of assembly, fourteen ClpP subunits assemble into 2 heptameric rings which stack back to back to give a disk-like structure with a central cavity, resembling the structure of eukaryotic proteasomes.

It localises to the cytoplasm. It carries out the reaction Hydrolysis of proteins to small peptides in the presence of ATP and magnesium. alpha-casein is the usual test substrate. In the absence of ATP, only oligopeptides shorter than five residues are hydrolyzed (such as succinyl-Leu-Tyr-|-NHMec, and Leu-Tyr-Leu-|-Tyr-Trp, in which cleavage of the -Tyr-|-Leu- and -Tyr-|-Trp bonds also occurs).. Its function is as follows. Cleaves peptides in various proteins in a process that requires ATP hydrolysis. Has a chymotrypsin-like activity. Plays a major role in the degradation of misfolded proteins. This chain is ATP-dependent Clp protease proteolytic subunit, found in Cupriavidus necator (strain ATCC 17699 / DSM 428 / KCTC 22496 / NCIMB 10442 / H16 / Stanier 337) (Ralstonia eutropha).